Here is a 167-residue protein sequence, read N- to C-terminus: MMARRSNAVRPLTIISHQHQTGGINIQPPRRMQFPRYRFIKKIEHRWVIRVVRGANIALRLIEHEVTWTVLLRQRVAIVSDIMFRKQFERCITDDFAIDGDTIAADFTPGNSTANAELLCDKFIKSHVCDFACKNGGRALTRKSELLSAQYSGLITSLKGKRSMAYY.

This is an uncharacterized protein from Escherichia coli (strain K12).